Consider the following 531-residue polypeptide: Acetate CoA-transferase YdiF (531 aa).

Glu-333 (5-glutamyl coenzyme A thioester intermediate) is an active-site residue.

It belongs to the 3-oxoacid CoA-transferase family. Homotetramer; dimer of dimers.

It carries out the reaction an acyl-CoA + acetate = a carboxylate + acetyl-CoA. In terms of biological role, coA transferase having broad substrate specificity for short-chain acyl-CoA thioesters with the activity decreasing when the length of the carboxylic acid chain exceeds four carbons. Exhibits high activity with acetoacetyl-CoA, propionyl-CoA, crotonoyl-CoA or butyryl-CoA as donors, with acetate as an acceptor. When acetyl-CoA is used as the donor, propionate, acetoacetate, butyrate, isobutyrate, and 4-hydroxybutyrate can be utilized as acceptors but not isovalerate. May play a role in short-chain fatty acid metabolism in E.coli. This Escherichia coli O157:H7 protein is Acetate CoA-transferase YdiF.